We begin with the raw amino-acid sequence, 195 residues long: Imidazoleglycerol-phosphate dehydratase (195 aa).

It belongs to the imidazoleglycerol-phosphate dehydratase family.

Its subcellular location is the cytoplasm. It catalyses the reaction D-erythro-1-(imidazol-4-yl)glycerol 3-phosphate = 3-(imidazol-4-yl)-2-oxopropyl phosphate + H2O. It participates in amino-acid biosynthesis; L-histidine biosynthesis; L-histidine from 5-phospho-alpha-D-ribose 1-diphosphate: step 6/9. The sequence is that of Imidazoleglycerol-phosphate dehydratase from Bordetella petrii (strain ATCC BAA-461 / DSM 12804 / CCUG 43448).